The primary structure comprises 615 residues: 1-deoxy-D-xylulose-5-phosphate synthase (615 aa).

Residues His-77 and 118–120 (GHS) contribute to the thiamine diphosphate site. Asp-149 lines the Mg(2+) pocket. Thiamine diphosphate is bound by residues 150–151 (GA), Asn-178, Tyr-286, and Glu-367. Mg(2+) is bound at residue Asn-178.

It belongs to the transketolase family. DXPS subfamily. As to quaternary structure, homodimer. Mg(2+) is required as a cofactor. Thiamine diphosphate serves as cofactor.

The enzyme catalyses D-glyceraldehyde 3-phosphate + pyruvate + H(+) = 1-deoxy-D-xylulose 5-phosphate + CO2. Its pathway is metabolic intermediate biosynthesis; 1-deoxy-D-xylulose 5-phosphate biosynthesis; 1-deoxy-D-xylulose 5-phosphate from D-glyceraldehyde 3-phosphate and pyruvate: step 1/1. In terms of biological role, catalyzes the acyloin condensation reaction between C atoms 2 and 3 of pyruvate and glyceraldehyde 3-phosphate to yield 1-deoxy-D-xylulose-5-phosphate (DXP). This is 1-deoxy-D-xylulose-5-phosphate synthase from Glaesserella parasuis serovar 5 (strain SH0165) (Haemophilus parasuis).